The chain runs to 501 residues: Phenylalanine--tRNA ligase alpha subunit (501 aa).

The L-phenylalanine site is built by Thr340 and Phe423. Glu425 serves as a coordination point for Mg(2+). Phe448 serves as a coordination point for L-phenylalanine.

The protein belongs to the class-II aminoacyl-tRNA synthetase family. Phe-tRNA synthetase alpha subunit type 2 subfamily. In terms of assembly, tetramer of two alpha and two beta subunits. It depends on Mg(2+) as a cofactor.

The protein localises to the cytoplasm. The catalysed reaction is tRNA(Phe) + L-phenylalanine + ATP = L-phenylalanyl-tRNA(Phe) + AMP + diphosphate + H(+). The chain is Phenylalanine--tRNA ligase alpha subunit from Methanococcus maripaludis (strain C7 / ATCC BAA-1331).